A 114-amino-acid chain; its full sequence is UPF0102 protein CD630_12710 (114 aa).

This sequence belongs to the UPF0102 family.

The protein is UPF0102 protein CD630_12710 of Clostridioides difficile (strain 630) (Peptoclostridium difficile).